Reading from the N-terminus, the 30-residue chain is Cytochrome b6/f complex 12.6 kDa peptide (30 aa).

A disordered region spans residues 1–30 (SGSGVRSAKKGGKAQGGQAGVGYKGSTEPG). The segment covering 13–23 (KAQGGQAGVGY) has biased composition (gly residues).

It localises to the plastid. It is found in the chloroplast. Its function is as follows. May be a component of the cytochrome b6/f complex which is part of the photosynthetic respiratory chain. The protein is Cytochrome b6/f complex 12.6 kDa peptide of Euglena gracilis.